Consider the following 638-residue polypeptide: ATP-dependent zinc metalloprotease FtsH (638 aa).

The Cytoplasmic portion of the chain corresponds to 1 to 11 (MSQKGKNKKWR). Residues 12–32 (SAGLYALLAIVLISLATTFLG) traverse the membrane as a helical segment. Residues 33–114 (NRPPERLEIS…LAVRPVQEEG (82 aa)) are Lumenal-facing. A helical membrane pass occupies residues 115–135 (LLGRILSTFFLPVLLLLGLFF). The Cytoplasmic portion of the chain corresponds to 136–638 (LLRRAQNGPG…TLPMAVNAGA (503 aa)). 209 to 216 (GPPGTGKT) is a binding site for ATP. His431 is a binding site for Zn(2+). Residue Glu432 is part of the active site. Zn(2+)-binding residues include His435 and Asp510.

The protein in the central section; belongs to the AAA ATPase family. It in the C-terminal section; belongs to the peptidase M41 family. Homohexamer. The cofactor is Zn(2+).

The protein localises to the cellular thylakoid membrane. Functionally, acts as a processive, ATP-dependent zinc metallopeptidase for both cytoplasmic and membrane proteins. Plays a role in the quality control of integral membrane proteins. The protein is ATP-dependent zinc metalloprotease FtsH of Synechococcus sp. (strain JA-2-3B'a(2-13)) (Cyanobacteria bacterium Yellowstone B-Prime).